The sequence spans 306 residues: Serine/threonine-protein phosphatase PP2A-2 catalytic subunit (306 aa).

Mn(2+) contacts are provided by aspartate 54, histidine 56, aspartate 82, and asparagine 114. Histidine 115 functions as the Proton donor in the catalytic mechanism. Residues histidine 164 and histidine 238 each coordinate Mn(2+). Leucine 306 bears the Leucine methyl ester mark.

This sequence belongs to the PPP phosphatase family. PP-2A subfamily. In terms of assembly, PP2A consists of a common heterodimeric core enzyme, composed of a 36 kDa catalytic subunit (subunit C) and a 65 kDa constant regulatory subunit (subunit A), that associates with a variety of regulatory subunits such as subunits B (the R2/B/PR55/B55, R3/B''/PR72/PR130/PR59 and R5/B'/B56 families). Interacts with B'THETA. Interacts with HDA14. Interacts with SRK2E/OST1. Interacts with TAP46. Requires Mn(2+) as cofactor. Post-translationally, reversibly methyl esterified on Leu-306 by leucine carboxyl methyltransferase 1 (LCMT1) and pectin methylesterase 1 (PME1). Carboxyl methylation influences the affinity of the catalytic subunit for the different regulatory subunits, thereby modulating the PP2A holoenzyme's substrate specificity, enzyme activity and cellular localization. In terms of processing, phosphorylation of either threonine (by autophosphorylation-activated protein kinase) or tyrosine results in inactivation of the phosphatase. Auto-dephosphorylation has been suggested as a mechanism for reactivation. As to expression, expressed in root meristem, emerging lateral roots, leaf vasculature, stipules, guard cells, anthers and pollen grains.

Its subcellular location is the cytoplasm. The protein localises to the cytosol. The protein resides in the nucleus. It is found in the peroxisome. It catalyses the reaction O-phospho-L-seryl-[protein] + H2O = L-seryl-[protein] + phosphate. The catalysed reaction is O-phospho-L-threonyl-[protein] + H2O = L-threonyl-[protein] + phosphate. Functionally, dephosphorylates and activates the actin-depolymerizing factor ADF1, which, in turn, regulates actin cytoskeleton remodeling and is involved in the blue light photoreceptor PHOT2-mediated chloroplast avoidance movements. Associates with the serine/threonine-protein phosphatase PP2A regulatory subunits A and B' to positively regulates beta-oxidation of fatty acids and protoauxins in peroxisomes by dephosphorylating peroxisomal beta-oxidation-related proteins. Acts as a negative regulator of abscisic acid (ABA) signaling. May regulate ABA-dependent gene expression. Involved in the light-dependent activation of nitrate reductase. This Arabidopsis thaliana (Mouse-ear cress) protein is Serine/threonine-protein phosphatase PP2A-2 catalytic subunit.